Consider the following 338-residue polypeptide: DNA-directed RNA polymerase subunit alpha (338 aa).

Residues 1-234 (MIQKNWQELI…DQLEIFVNFE (234 aa)) form an alpha N-terminal domain (alpha-NTD) region. An alpha C-terminal domain (alpha-CTD) region spans residues 250–338 (FSPALLKKVD…ELAKRFEEHY (89 aa)).

It belongs to the RNA polymerase alpha chain family. As to quaternary structure, homodimer. The RNAP catalytic core consists of 2 alpha, 1 beta, 1 beta' and 1 omega subunit. When a sigma factor is associated with the core the holoenzyme is formed, which can initiate transcription.

The enzyme catalyses RNA(n) + a ribonucleoside 5'-triphosphate = RNA(n+1) + diphosphate. Functionally, DNA-dependent RNA polymerase catalyzes the transcription of DNA into RNA using the four ribonucleoside triphosphates as substrates. In Xanthobacter autotrophicus (strain ATCC BAA-1158 / Py2), this protein is DNA-directed RNA polymerase subunit alpha.